Consider the following 71-residue polypeptide: Putative antitoxin VapB14 (71 aa).

In terms of biological role, putative antitoxin component of a possible type II toxin-antitoxin (TA) system. The cognate toxin is VapB14. In Mycobacterium tuberculosis (strain ATCC 25618 / H37Rv), this protein is Putative antitoxin VapB14 (vapB14).